The primary structure comprises 187 residues: Ribonuclease HII (187 aa).

In terms of domain architecture, RNase H type-2 spans 1-187; that stretch reads MIILGIDEAG…YKPVQVLLNE (187 aa). A divalent metal cation is bound by residues Asp-7, Glu-8, and Asp-99.

This sequence belongs to the RNase HII family. Mn(2+) serves as cofactor. The cofactor is Mg(2+).

Its subcellular location is the cytoplasm. It carries out the reaction Endonucleolytic cleavage to 5'-phosphomonoester.. Functionally, endonuclease that specifically degrades the RNA of RNA-DNA hybrids. The sequence is that of Ribonuclease HII from Francisella tularensis subsp. holarctica (strain FTNF002-00 / FTA).